Here is a 166-residue protein sequence, read N- to C-terminus: Large ribosomal subunit protein uL10 (166 aa).

Belongs to the universal ribosomal protein uL10 family. As to quaternary structure, part of the ribosomal stalk of the 50S ribosomal subunit. The N-terminus interacts with L11 and the large rRNA to form the base of the stalk. The C-terminus forms an elongated spine to which L12 dimers bind in a sequential fashion forming a multimeric L10(L12)X complex.

In terms of biological role, forms part of the ribosomal stalk, playing a central role in the interaction of the ribosome with GTP-bound translation factors. This Bacillus cereus (strain ATCC 14579 / DSM 31 / CCUG 7414 / JCM 2152 / NBRC 15305 / NCIMB 9373 / NCTC 2599 / NRRL B-3711) protein is Large ribosomal subunit protein uL10.